Consider the following 602-residue polypeptide: Elongation factor 4 (602 aa).

The tr-type G domain maps to 7-196 (SKIRNFCIIA…HPQNEIKSPT (190 aa)). GTP-binding positions include 19-24 (DHGKST) and 136-139 (NKVD).

Belongs to the TRAFAC class translation factor GTPase superfamily. Classic translation factor GTPase family. LepA subfamily.

It localises to the cell inner membrane. The enzyme catalyses GTP + H2O = GDP + phosphate + H(+). Required for accurate and efficient protein synthesis under certain stress conditions. May act as a fidelity factor of the translation reaction, by catalyzing a one-codon backward translocation of tRNAs on improperly translocated ribosomes. Back-translocation proceeds from a post-translocation (POST) complex to a pre-translocation (PRE) complex, thus giving elongation factor G a second chance to translocate the tRNAs correctly. Binds to ribosomes in a GTP-dependent manner. The polypeptide is Elongation factor 4 (Prochlorococcus marinus (strain MIT 9515)).